A 149-amino-acid chain; its full sequence is Endoribonuclease YbeY (149 aa).

Zn(2+) is bound by residues histidine 112, histidine 116, and histidine 122.

The protein belongs to the endoribonuclease YbeY family. Zn(2+) is required as a cofactor.

The protein localises to the cytoplasm. Single strand-specific metallo-endoribonuclease involved in late-stage 70S ribosome quality control and in maturation of the 3' terminus of the 16S rRNA. This Methylibium petroleiphilum (strain ATCC BAA-1232 / LMG 22953 / PM1) protein is Endoribonuclease YbeY.